We begin with the raw amino-acid sequence, 901 residues long: MNVSSDVDFISVGCNCLGDCLVWGQNKLAAYGAQNFIALFDPIQSKVLATLPGHKDRVNHICWVPNINEEYKNRYSSYENELLSCSSDNTIISWKQIKGGLNYQYKVVEVLKGHSDSVTNISVLDFPDGSLLMCSTSADNTVKLWRRESLTKENIDTDTLPKWECIQTIDFTPKCMECSSLAFIPGTTIPLLAVGGLEPKIHIYIQNLDSTTATLQFKKLMSLQGHQDWIRSLSFKTINEGEGEGEEEELILASSSQDFKIRLWKISKFTAEKQKQQQLDESGNGGANLLGSLSTQLSGVTSLSTKGYLFNCNSVKYIILLDAVLSGHDDWVYSIHWSPARRDQETGKKIQEQMLISASMDKTAIVWRPDRTTGIWIDESRVGDMGGNILGQYGAVFSPCSQYILSHGYNGAFHFWKQNTNQKSSFWEPQIVVSGHFGPVQDLMWSPDYSYFISCSTDRTLRLFSEWKRNNNNNNLENNKEQQIISWNEIARPQIHGYDLECFTFINKKTHVIVSGAEEKIMRAFVGSQNFVDTLLNISKVQPVNDGTQRPLAANQPSLGLSNKPYFTGGSDYNENIDNNNNNNNNNGNGEENTEDSIKMKMGGGDEGGGGEGMDTGYFEDEIPFNPEVLSEPPFEEHLLQSSLWPEIHKFYGHGNEIVAVACSADGMYLASTCRASSADQATVRIWNVSNWKECANLKGHTLTVVNLSFSHNSKYLLGVSRDRMWTLWERSASNSEEPFVKVISAPKSHGRIIWSGSWSHDDKFFATGARDKLVKVWNLDNIKDIKNACASTLPAFGSGVTCVEFAPKSSKFTGEHGDHLLAVGEDDGKITIWKSTTSTSNPKSLDWTCVHTISPLISHTLDVRRIRWRDTPTINGNSLTYQIVTCSVDHSVRIFNIKFD.

WD repeat units follow at residues 11-50 (SVGC…VLAT), 53-104 (GHKD…LNYQ), 113-155 (GHSD…KENI), 173-214 (PKCM…TTAT), 225-274 (GHQD…AEKQ), 327-377 (GHDD…GIWI), 387-426 (GNIL…KSSF), 435-474 (GHFG…NNNN), and 495-535 (IHGY…VDTL). Residues 571 to 598 (SDYNENIDNNNNNNNNNGNGEENTEDSI) are disordered. Residues 574-591 (NENIDNNNNNNNNNGNGE) show a composition bias toward low complexity. 5 WD repeats span residues 653-697 (GHGN…ECAN), 700-739 (GHTL…SEEP), 749-788 (SHGR…DIKN), 796-844 (AFGS…SNPK), and 859-897 (SHTL…RIFN).

It belongs to the WD repeat ELP2 family. Component of the elongator complex.

The protein resides in the cytoplasm. Its subcellular location is the nucleus. It participates in tRNA modification; 5-methoxycarbonylmethyl-2-thiouridine-tRNA biosynthesis. Its function is as follows. Component of the elongator complex which is required for multiple tRNA modifications, including mcm5U (5-methoxycarbonylmethyl uridine), mcm5s2U (5-methoxycarbonylmethyl-2-thiouridine), and ncm5U (5-carbamoylmethyl uridine). The elongator complex catalyzes formation of carboxymethyluridine in the wobble base at position 34 in tRNAs. The sequence is that of Elongator complex protein 2 (elp2) from Dictyostelium discoideum (Social amoeba).